Consider the following 469-residue polypeptide: Glutamate--tRNA ligase (469 aa).

The short motif at 11–21 (PSPTGFIHLGN) is the 'HIGH' region element. The short motif at 243–247 (KMSKR) is the 'KMSKS' region element. ATP is bound at residue lysine 246.

Belongs to the class-I aminoacyl-tRNA synthetase family. Glutamate--tRNA ligase type 1 subfamily. As to quaternary structure, monomer.

The protein localises to the cytoplasm. The enzyme catalyses tRNA(Glu) + L-glutamate + ATP = L-glutamyl-tRNA(Glu) + AMP + diphosphate. Its function is as follows. Catalyzes the attachment of glutamate to tRNA(Glu) in a two-step reaction: glutamate is first activated by ATP to form Glu-AMP and then transferred to the acceptor end of tRNA(Glu). The sequence is that of Glutamate--tRNA ligase from Burkholderia cenocepacia (strain ATCC BAA-245 / DSM 16553 / LMG 16656 / NCTC 13227 / J2315 / CF5610) (Burkholderia cepacia (strain J2315)).